Here is a 164-residue protein sequence, read N- to C-terminus: CB1 cannabinoid receptor-interacting protein 1 (164 aa).

The protein belongs to the CNRIP family. Interacts with the cannabinoid receptor CNR1 (via C-terminus). Does not interact with cannabinoid receptor CNR2.

Functionally, suppresses cannabinoid receptor CNR1-mediated tonic inhibition of voltage-gated calcium channels. The sequence is that of CB1 cannabinoid receptor-interacting protein 1 (CNRIP1) from Bos taurus (Bovine).